The primary structure comprises 462 residues: 23S rRNA (uracil(1939)-C(5))-methyltransferase RlmD (462 aa).

The TRAM domain maps to 6 to 76 (KSRKPQQPEY…KRLEEAEMVE (71 aa)). [4Fe-4S] cluster is bound by residues Cys90, Cys96, Cys99, and Cys178. Residues Gln287, Phe316, Asn321, Glu340, Asp367, and Asp388 each contribute to the S-adenosyl-L-methionine site. Catalysis depends on Cys414, which acts as the Nucleophile.

Belongs to the class I-like SAM-binding methyltransferase superfamily. RNA M5U methyltransferase family. RlmD subfamily.

The enzyme catalyses uridine(1939) in 23S rRNA + S-adenosyl-L-methionine = 5-methyluridine(1939) in 23S rRNA + S-adenosyl-L-homocysteine + H(+). Functionally, catalyzes the formation of 5-methyl-uridine at position 1939 (m5U1939) in 23S rRNA. This chain is 23S rRNA (uracil(1939)-C(5))-methyltransferase RlmD, found in Acinetobacter baumannii (strain AB0057).